Reading from the N-terminus, the 285-residue chain is 4-diphosphocytidyl-2-C-methyl-D-erythritol kinase (285 aa).

Lysine 14 is a catalytic residue. 97–107 is a binding site for ATP; the sequence is PMGGGIGGGSS. Aspartate 139 is a catalytic residue.

The protein belongs to the GHMP kinase family. IspE subfamily.

It catalyses the reaction 4-CDP-2-C-methyl-D-erythritol + ATP = 4-CDP-2-C-methyl-D-erythritol 2-phosphate + ADP + H(+). It participates in isoprenoid biosynthesis; isopentenyl diphosphate biosynthesis via DXP pathway; isopentenyl diphosphate from 1-deoxy-D-xylulose 5-phosphate: step 3/6. Its function is as follows. Catalyzes the phosphorylation of the position 2 hydroxy group of 4-diphosphocytidyl-2C-methyl-D-erythritol. In Tolumonas auensis (strain DSM 9187 / NBRC 110442 / TA 4), this protein is 4-diphosphocytidyl-2-C-methyl-D-erythritol kinase.